Consider the following 607-residue polypeptide: Glutamine--fructose-6-phosphate aminotransferase [isomerizing] (607 aa).

The active-site Nucleophile; for GATase activity is Cys-2. One can recognise a Glutamine amidotransferase type-2 domain in the interval 2-217; it reads CGIIGILGKK…DGDWAVLTRE (216 aa). 2 SIS domains span residues 277 to 422 and 455 to 597; these read TVRS…QRGS and ICRD…VDQP. Lys-602 functions as the For Fru-6P isomerization activity in the catalytic mechanism.

In terms of assembly, homodimer.

It localises to the cytoplasm. The catalysed reaction is D-fructose 6-phosphate + L-glutamine = D-glucosamine 6-phosphate + L-glutamate. Its function is as follows. Catalyzes the first step in hexosamine metabolism, converting fructose-6P into glucosamine-6P using glutamine as a nitrogen source. The chain is Glutamine--fructose-6-phosphate aminotransferase [isomerizing] from Bartonella quintana (strain Toulouse) (Rochalimaea quintana).